Reading from the N-terminus, the 494-residue chain is Alpha-amylase 1 (494 aa).

The first 18 residues, 1-18, serve as a signal peptide directing secretion; it reads MFLAKSIVCLALLAVANA. A disulfide bridge links cysteine 46 with cysteine 102. Asparagine 116, arginine 165, and aspartate 174 together coordinate Ca(2+). Cysteines 153 and 167 form a disulfide. Chloride is bound at residue arginine 202. Aspartate 204 serves as the catalytic Nucleophile. A Ca(2+)-binding site is contributed by histidine 208. Glutamate 241 functions as the Proton donor in the catalytic mechanism. Asparagine 304 and arginine 343 together coordinate chloride. Residues 350–370 form a disordered region; that stretch reads FTDTDQGPPTTDGQNIASPSF. Over residues 351–363 the composition is skewed to low complexity; sequence TDTDQGPPTTDGQ. Cystine bridges form between cysteine 376-cysteine 382 and cysteine 448-cysteine 460.

Belongs to the glycosyl hydrolase 13 family. Monomer. It depends on Ca(2+) as a cofactor. Chloride serves as cofactor.

The catalysed reaction is Endohydrolysis of (1-&gt;4)-alpha-D-glucosidic linkages in polysaccharides containing three or more (1-&gt;4)-alpha-linked D-glucose units.. This is Alpha-amylase 1 (Amy35) from Drosophila ananassae (Fruit fly).